Here is a 223-residue protein sequence, read N- to C-terminus: NLP effector protein 3 (223 aa).

The Conserved undecapeptide motif motif lies at 90–100; the sequence is AIMYVWYFPKD. The short motif at 107-113 is the Conserved heptapeptide motif element; it reads GHRHDWE.

Belongs to the Necrosis inducing protein (NPP1) family.

Its subcellular location is the secreted. It is found in the host cytoplasm. Functionally, probable secreted effector that may act as a pathogen-associated molecular pattern (PAMP) recognized by the plant immune system. Seems not to induce necrosis, neither in several susceptible or resistant Vitis species nor in the dicot model plant Nicotiana benthamiana. The polypeptide is NLP effector protein 3 (Plasmopara viticola (Downy mildew of grapevine)).